Here is a 287-residue protein sequence, read N- to C-terminus: T-cell ecto-ADP-ribosyltransferase 1 (287 aa).

The first 20 residues, 1-20 (MPSNNFKFFLTWWLTQQVTG), serve as a signal peptide directing secretion. Cystine bridges form between Cys-41-Cys-246, Cys-80-Cys-201, and Cys-141-Cys-193. The region spanning 61–241 (EELKLEWEKA…ISLDSPKRKK (181 aa)) is the TR mART core domain. Residues Tyr-98 and Arg-146 each contribute to the NAD(+) site. Active-site residues include Arg-146 and Ser-167. An N-linked (GlcNAc...) asparagine glycan is attached at Asn-171. Ser-202 contributes to the NAD(+) binding site. Residue Glu-209 is part of the active site. Asn-256 carries N-linked (GlcNAc...) asparagine glycosylation. A lipid anchor (GPI-anchor amidated serine) is attached at Ser-258. A propeptide spans 259–287 (SLGSRESCVSLFLVVLLGLLVQQLTLAEP) (removed in mature form).

Belongs to the Arg-specific ADP-ribosyltransferase family. Post-translationally, it is proposed that in the absence of reducing agents, a disulfide bond is formed between Cys-80 and Cys-201, leading to a conformational change that reduces the catalytic rate of NAD glycohydrolysis. Expressed in spleen, intestine and thymus.

The protein localises to the cell membrane. The enzyme catalyses L-arginyl-[protein] + NAD(+) = N(omega)-(ADP-D-ribosyl)-L-arginyl-[protein] + nicotinamide + H(+). It catalyses the reaction NAD(+) + H2O = ADP-D-ribose + nicotinamide + H(+). In terms of biological role, has both ADP-ribosyltransferase activity and thiol-dependent NAD(+) glycohydrolase activity. The polypeptide is T-cell ecto-ADP-ribosyltransferase 1 (Art2a) (Mus musculus (Mouse)).